A 355-amino-acid polypeptide reads, in one-letter code: Butyrate kinase 1 (355 aa).

This sequence belongs to the acetokinase family.

The protein resides in the cytoplasm. It carries out the reaction butanoate + ATP = butanoyl phosphate + ADP. The protein operates within lipid metabolism; butanoate metabolism. Catalyzes the conversion of butyryl-CoA through butyryl phosphate to butyrate. The protein is Butyrate kinase 1 (buk1) of Clostridium acetobutylicum (strain ATCC 824 / DSM 792 / JCM 1419 / IAM 19013 / LMG 5710 / NBRC 13948 / NRRL B-527 / VKM B-1787 / 2291 / W).